Consider the following 427-residue polypeptide: Putative F-box/FBD/LRR-repeat protein At4g13965 (427 aa).

One can recognise an F-box domain in the interval 13-61 (ADRISQLPEALIIQILSLLPTEVAVTTSVLSKQWQFLWKMLPKLNFDSL). LRR repeat units lie at residues 67-93 (FKTF…HLIV), 98-122 (CNSM…VLEV), 141-168 (TLEL…HLHY), 169-194 (VDFK…VVHR), 213-241 (LTIY…KIVG), and 258-284 (SMIV…FLEF). Residues 346-396 (KWNKPKIVPECLLFHLETFMWKGYEWKRNDETEVAKYILSNTNRLKRATFF) form the FBD domain.

In Arabidopsis thaliana (Mouse-ear cress), this protein is Putative F-box/FBD/LRR-repeat protein At4g13965.